The primary structure comprises 307 residues: Mitochondrial brown fat uncoupling protein 1 (307 aa).

The Mitochondrial intermembrane segment spans residues 1-10; it reads MVSQTTSEVQ. Residues 11–32 traverse the membrane as a helical segment; sequence PTMGVKIFSAGVAACLADIITF. Solcar repeat units follow at residues 11–102, 111–201, and 210–295; these read PTMG…VQEY, PTLV…MKGA, and DDVP…LKKE. Residues 33–73 lie on the Mitochondrial matrix side of the membrane; the sequence is PLDTAKVRLQIQGEGQTSSTIRYKGVLGTITTLAKTEGLPK. A fatty acid 16:0-binding site is contributed by Lys56. The helical transmembrane segment at 74 to 96 threads the bilayer; the sequence is LYSGLPAGIQRQISFASLRIGLY. Residues 97 to 116 lie on the Mitochondrial intermembrane side of the membrane; that stretch reads DTVQEYFSSGKETPPTLVNR. The chain crosses the membrane as a helical span at residues 117-133; that stretch reads ISAGLMTGGVAVFIGQP. Over 134–178 the chain is Mitochondrial matrix; that stretch reads TEVVKVRLQAQSHLHGIKPRYTGTYNAYRIIATTESLSTLWKGTT. A helical transmembrane segment spans residues 179–195; it reads PNLLRNVIINCTELVTY. The Mitochondrial intermembrane segment spans residues 196 to 212; it reads DLMKGALVNNQILADDV. Residues 213–232 form a helical membrane-spanning segment; sequence PCHLLSALVAGFCTTFLASP. Topologically, residues 233–266 are mitochondrial matrix; that stretch reads ADVVKTRFINSLPGQYPSVPSCAMTMFTKEGPTA. Cys254 carries the cysteine sulfenic acid (-SOH) modification. The chain crosses the membrane as a helical span at residues 267-289; it reads FFKGFVPSFLRLASWNVIMFVCF. Lys269 is a fatty acid 16:0 binding site. Residues 290–307 lie on the Mitochondrial intermembrane side of the membrane; sequence EQLKKELMKSRQTVDCTT.

This sequence belongs to the mitochondrial carrier (TC 2.A.29) family. Most probably functions as a monomer. Binds one purine nucleotide per monomer. However, has also been suggested to function as a homodimer or a homotetramer. Tightly associates with cardiolipin in the mitochondrion inner membrane; may stabilize and regulate its activity. In terms of processing, may undergo sulfenylation upon cold exposure. May increase the sensitivity of UCP1 thermogenic function to the activation by noradrenaline probably through structural effects. Post-translationally, may undergo ubiquitin-mediated proteasomal degradation. As to expression, brown adipose tissue.

Its subcellular location is the mitochondrion inner membrane. The enzyme catalyses H(+)(in) = H(+)(out). Has no constitutive proton transporter activity and has to be activated by long-chain fatty acids/LCFAs. Inhibited by purine nucleotides. Both purine nucleotides and LCFAs bind the cytosolic side of the transporter and directly compete to activate or inhibit it. Activated by noradrenaline and reactive oxygen species. Despite lacking canonical translational encoding for selenocysteine, a small pool of the protein has been observed to selectively incorporate selenocysteine at 'Cys-254'. Selenocysteine-modified protein is highly sensitive to redox modification and may constitute a pool of protein highly sensitive to activation by elevated levels of reactive oxygen species (ROS). In terms of biological role, mitochondrial protein responsible for thermogenic respiration, a specialized capacity of brown adipose tissue and beige fat that participates in non-shivering adaptive thermogenesis to temperature and diet variations and more generally to the regulation of energy balance. Functions as a long-chain fatty acid/LCFA and proton symporter, simultaneously transporting one LCFA and one proton through the inner mitochondrial membrane. However, LCFAs remaining associated with the transporter via their hydrophobic tails, it results in an apparent transport of protons activated by LCFAs. Thereby, dissipates the mitochondrial proton gradient and converts the energy of substrate oxydation into heat instead of ATP. Regulates the production of reactive oxygen species/ROS by mitochondria. This chain is Mitochondrial brown fat uncoupling protein 1, found in Phodopus sungorus (Striped hairy-footed hamster).